Here is a 319-residue protein sequence, read N- to C-terminus: Ribose-phosphate pyrophosphokinase (319 aa).

ATP-binding positions include 41–43 (DGE) and 100–101 (RQ). Mg(2+) is bound by residues His134 and Asp176. Residue Lys199 is part of the active site. D-ribose 5-phosphate is bound by residues Arg201, Asp225, and 229–233 (DTAGT).

Belongs to the ribose-phosphate pyrophosphokinase family. Class I subfamily. Homohexamer. It depends on Mg(2+) as a cofactor.

It is found in the cytoplasm. It carries out the reaction D-ribose 5-phosphate + ATP = 5-phospho-alpha-D-ribose 1-diphosphate + AMP + H(+). Its pathway is metabolic intermediate biosynthesis; 5-phospho-alpha-D-ribose 1-diphosphate biosynthesis; 5-phospho-alpha-D-ribose 1-diphosphate from D-ribose 5-phosphate (route I): step 1/1. Functionally, involved in the biosynthesis of the central metabolite phospho-alpha-D-ribosyl-1-pyrophosphate (PRPP) via the transfer of pyrophosphoryl group from ATP to 1-hydroxyl of ribose-5-phosphate (Rib-5-P). The chain is Ribose-phosphate pyrophosphokinase from Clostridium perfringens (strain 13 / Type A).